The sequence spans 116 residues: Large ribosomal subunit protein bL19 (116 aa).

Belongs to the bacterial ribosomal protein bL19 family.

Its function is as follows. This protein is located at the 30S-50S ribosomal subunit interface and may play a role in the structure and function of the aminoacyl-tRNA binding site. The polypeptide is Large ribosomal subunit protein bL19 (Fusobacterium nucleatum subsp. nucleatum (strain ATCC 25586 / DSM 15643 / BCRC 10681 / CIP 101130 / JCM 8532 / KCTC 2640 / LMG 13131 / VPI 4355)).